The chain runs to 288 residues: MSQFSFTKMHGLGNSYIYVNMFEEQIPEEDLALVAEKVSNINTGIGADGMILICPSDVAPVKMRMFNNDGSEGKSCGNGLRCVAKYAYEHKLVEDTVFTIETLAGIVTAEVTVEEGKVTLAKIDMGAPRLTRAEIPMLGEGETPFIRENFLYNNHRYAFTAVSMGNPHAVIFVDDVDQAPLTTLGPVLETHEMFPERVNVEFIEILNEEEMNFRVWERGSGVTQACGTGACAAVVASILNGKMERGKEITVHLAGGDLMIAWTEEGNVLMKGPAEVICRGVYEYKIEA.

Asn14 and Asn67 together coordinate substrate. Residue Cys76 is the Proton donor of the active site. Substrate is bound by residues 77 to 78 (GN), Asn166, Asn199, and 217 to 218 (ER). Residue Cys226 is the Proton acceptor of the active site. 227–228 (GT) serves as a coordination point for substrate.

Belongs to the diaminopimelate epimerase family. Homodimer.

Its subcellular location is the cytoplasm. The catalysed reaction is (2S,6S)-2,6-diaminopimelate = meso-2,6-diaminopimelate. It participates in amino-acid biosynthesis; L-lysine biosynthesis via DAP pathway; DL-2,6-diaminopimelate from LL-2,6-diaminopimelate: step 1/1. Its function is as follows. Catalyzes the stereoinversion of LL-2,6-diaminopimelate (L,L-DAP) to meso-diaminopimelate (meso-DAP), a precursor of L-lysine and an essential component of the bacterial peptidoglycan. The sequence is that of Diaminopimelate epimerase from Bacillus cereus (strain ATCC 10987 / NRS 248).